A 539-amino-acid polypeptide reads, in one-letter code: Chaperonin GroEL (539 aa).

ATP is bound by residues 29–32, 86–90, Gly-412, 475–477, and Asp-491; these read TLGP, DGTTT, and NAA.

It belongs to the chaperonin (HSP60) family. Forms a cylinder of 14 subunits composed of two heptameric rings stacked back-to-back. Interacts with the co-chaperonin GroES.

The protein resides in the cytoplasm. It catalyses the reaction ATP + H2O + a folded polypeptide = ADP + phosphate + an unfolded polypeptide.. Functionally, together with its co-chaperonin GroES, plays an essential role in assisting protein folding. The GroEL-GroES system forms a nano-cage that allows encapsulation of the non-native substrate proteins and provides a physical environment optimized to promote and accelerate protein folding. This Tsukamurella tyrosinosolvens protein is Chaperonin GroEL.